We begin with the raw amino-acid sequence, 294 residues long: Transcription factor nsy-7 (294 aa).

Disordered stretches follow at residues 43–119 (CNLR…TPDL) and 167–191 (LRLP…DSPL). 2 stretches are compositionally biased toward polar residues: residues 52-63 (DQPTTSSNSVKE) and 81-115 (RRQS…SNDP). Positions 192-232 (QTRMKGWQREYIKEVIKDSHYPTEEELRDIEQKCDLSRKQI) form a DNA-binding region, homeobox; atypical. The segment at 238-274 (KRLTNPNRKPRVNHHDEKRKEQEERDSLADPDDDMIN) is disordered. Positions 250 to 265 (NHHDEKRKEQEERDSL) are enriched in basic and acidic residues.

As to expression, expressed widely, including gut, the amphid sheath glial cells, and head and tail neurons including AWC, ASE, and ASH. Expressed in AWC (ON) olfactory neuron but not AWC (OFF).

It is found in the nucleus. Functionally, transcriptional regulator which binds DNA consensus sequence 5'-CCTTAAC-3'. Plays a role in establishing and maintaining asymmetric cell fates in chemosensory AWC neurons during larval neuronal development. This is achieved by repressing the expression of multiple AWC (OFF) genes, including srsx-3 and hlh-11 in the AWC (ON) neuron. Activates expression of sox-2 in the AWC (ON) neuron. This Caenorhabditis elegans protein is Transcription factor nsy-7.